We begin with the raw amino-acid sequence, 394 residues long: Elongation factor Tu (394 aa).

One can recognise a tr-type G domain in the interval 10–204 (KPHVNVGTIG…ALDTYIPEPE (195 aa)). Residues 19-26 (GHVDHGKT) are G1. Residue 19–26 (GHVDHGKT) coordinates GTP. Thr26 is a Mg(2+) binding site. Positions 60–64 (GITIN) are G2. The segment at 81–84 (DCPG) is G3. GTP is bound by residues 81–85 (DCPGH) and 136–139 (NKCD). Positions 136–139 (NKCD) are G4. The interval 174-176 (SAL) is G5.

The protein belongs to the TRAFAC class translation factor GTPase superfamily. Classic translation factor GTPase family. EF-Tu/EF-1A subfamily. As to quaternary structure, monomer.

It localises to the cytoplasm. It catalyses the reaction GTP + H2O = GDP + phosphate + H(+). In terms of biological role, GTP hydrolase that promotes the GTP-dependent binding of aminoacyl-tRNA to the A-site of ribosomes during protein biosynthesis. This Shewanella sediminis (strain HAW-EB3) protein is Elongation factor Tu.